A 485-amino-acid polypeptide reads, in one-letter code: Probable cobyric acid synthase (485 aa).

Residues 250-435 (EVEIAVIRLP…LHGLFDNENI (186 aa)) enclose the GATase cobBQ-type domain. C328 functions as the Nucleophile in the catalytic mechanism. H427 is a catalytic residue.

Belongs to the CobB/CobQ family. CobQ subfamily.

It participates in cofactor biosynthesis; adenosylcobalamin biosynthesis. Catalyzes amidations at positions B, D, E, and G on adenosylcobyrinic A,C-diamide. NH(2) groups are provided by glutamine, and one molecule of ATP is hydrogenolyzed for each amidation. This is Probable cobyric acid synthase from Methanosarcina acetivorans (strain ATCC 35395 / DSM 2834 / JCM 12185 / C2A).